We begin with the raw amino-acid sequence, 173 residues long: DNA-directed RNA polymerase subunit delta (173 aa).

Residues 14 to 81 (MALVEIAHEL…SDQTWGLRSW (68 aa)) enclose the HTH HARE-type domain. A disordered region spans residues 110-173 (LDLDEFEEID…DYDDEEEEIK (64 aa)).

It belongs to the RpoE family. As to quaternary structure, RNAP is composed of a core of 2 alpha, a beta and a beta' subunit. The core is associated with a delta subunit, and at least one of epsilon or omega. When a sigma factor is associated with the core the holoenzyme is formed, which can initiate transcription.

Functionally, participates in both the initiation and recycling phases of transcription. In the presence of the delta subunit, RNAP displays an increased specificity of transcription, a decreased affinity for nucleic acids, and an increased efficiency of RNA synthesis because of enhanced recycling. May function in sigma factor switching. It displaces RNA bound to RNA polymerase in a binary complex. This Bacillus subtilis (strain 168) protein is DNA-directed RNA polymerase subunit delta.